We begin with the raw amino-acid sequence, 375 residues long: Cobalt-precorrin-5B C(1)-methyltransferase (375 aa).

Belongs to the CbiD family.

The enzyme catalyses Co-precorrin-5B + S-adenosyl-L-methionine = Co-precorrin-6A + S-adenosyl-L-homocysteine. It participates in cofactor biosynthesis; adenosylcobalamin biosynthesis; cob(II)yrinate a,c-diamide from sirohydrochlorin (anaerobic route): step 6/10. Functionally, catalyzes the methylation of C-1 in cobalt-precorrin-5B to form cobalt-precorrin-6A. This is Cobalt-precorrin-5B C(1)-methyltransferase from Paracidovorax citrulli (strain AAC00-1) (Acidovorax citrulli).